Here is a 248-residue protein sequence, read N- to C-terminus: MKKKLIVGNWKMNGGLAANAVLLKALKEGLPEGGNAGVAVAVPAVYLAQAQAELEGSAIGVAAQDVSQHESGAYTGELSAAMLRDFGVRYTLVGHSERRQYHGETDAVVALKAQAALAKGVTPIVCVGETLAEREAGQTEEVVKRQLAAVIHQVGQCINELVVAYEPVWAIGTGRTATPEQAQQVHAVLRAQLAAASQQADRIALLYGGSMNASNAAQLLAQADIDGGLVGGASLKAADFLTIIAAAQ.

9–11 (NWK) serves as a coordination point for substrate. The active-site Electrophile is H95. The Proton acceptor role is filled by E166. Residues G172, S210, and 231–232 (GG) contribute to the substrate site.

The protein belongs to the triosephosphate isomerase family. In terms of assembly, homodimer.

The protein resides in the cytoplasm. It carries out the reaction D-glyceraldehyde 3-phosphate = dihydroxyacetone phosphate. It participates in carbohydrate biosynthesis; gluconeogenesis. Its pathway is carbohydrate degradation; glycolysis; D-glyceraldehyde 3-phosphate from glycerone phosphate: step 1/1. Its function is as follows. Involved in the gluconeogenesis. Catalyzes stereospecifically the conversion of dihydroxyacetone phosphate (DHAP) to D-glyceraldehyde-3-phosphate (G3P). The protein is Triosephosphate isomerase of Delftia acidovorans (strain DSM 14801 / SPH-1).